We begin with the raw amino-acid sequence, 157 residues long: Putative pre-16S rRNA nuclease (157 aa).

Belongs to the YqgF nuclease family.

It localises to the cytoplasm. Could be a nuclease involved in processing of the 5'-end of pre-16S rRNA. The protein is Putative pre-16S rRNA nuclease of Orientia tsutsugamushi (strain Ikeda) (Rickettsia tsutsugamushi).